The following is a 263-amino-acid chain: MAPK-interacting and spindle-stabilizing protein (263 aa).

The interval 13-238 is disordered; the sequence is GSPAPFLPSG…LGKQQGHNTT (226 aa). 2 stretches are compositionally biased toward pro residues: residues 14–34 and 140–155; these read SPAP…PYPG and GLQP…PPGP. Positions 156-165 are enriched in low complexity; that stretch reads SAASPGPGSL. Residues 176–189 show a composition bias toward polar residues; sequence PSDSSNPESTLEST. Over residues 202–213 the composition is skewed to basic residues; that stretch reads IKRRRSKKKSKR.

Belongs to the MISS family. Interacts with MAPK1. Phosphorylated in vitro by MAPK1.

It is found in the cytoplasm. Its subcellular location is the cytoskeleton. The protein resides in the spindle. In terms of biological role, involved in the maintenance of the spindle integrity during the cytostatic factor (CSF) arrest of oocytes. The chain is MAPK-interacting and spindle-stabilizing protein (Mapk1ip1) from Mus musculus (Mouse).